An 86-amino-acid chain; its full sequence is Neurotoxin LmNaTx34.2 (86 aa).

A signal peptide spans 1 to 18 (MKTLILVVIALMVIEVKS). An LCN-type CS-alpha/beta domain is found at 19–85 (DGYLMVRAGR…IWTYEKNTCS (67 aa)). 4 disulfides stabilise this stretch: cysteine 32–cysteine 84, cysteine 36–cysteine 57, cysteine 43–cysteine 64, and cysteine 47–cysteine 66.

This sequence belongs to the long (4 C-C) scorpion toxin superfamily. Sodium channel inhibitor family. Beta subfamily. Expressed by the venom gland.

It is found in the secreted. Functionally, binds voltage-independently at site-4 of sodium channels (Nav) and shift the voltage of activation toward more negative potentials thereby affecting sodium channel activation and promoting spontaneous and repetitive firing. This chain is Neurotoxin LmNaTx34.2, found in Lychas mucronatus (Chinese swimming scorpion).